The primary structure comprises 232 residues: Large ribosomal subunit protein uL1 (232 aa).

This sequence belongs to the universal ribosomal protein uL1 family. In terms of assembly, part of the 50S ribosomal subunit.

Binds directly to 23S rRNA. The L1 stalk is quite mobile in the ribosome, and is involved in E site tRNA release. In terms of biological role, protein L1 is also a translational repressor protein, it controls the translation of the L11 operon by binding to its mRNA. The polypeptide is Large ribosomal subunit protein uL1 (Bacteroides fragilis (strain ATCC 25285 / DSM 2151 / CCUG 4856 / JCM 11019 / LMG 10263 / NCTC 9343 / Onslow / VPI 2553 / EN-2)).